A 216-amino-acid chain; its full sequence is MSSDQVLERFMKNGLMNAELKEFFEKALVNEGFSTMELRMQETPIKIILKVAKPHEAIGEKKFRLRQFQHLAAQRLEVPDESVEIVVEKVHEKGLCALIQANFIREKILGGVQYRRAVNMALKTARHAKAQGCQIIVSGKLKGQRAKSVKFQDGVLIHSGDAVKDYINTGYATVETKQGVIGIQVRIMLPYDPEGVLGPNYPLPDRITILEPSEIQ.

Residues L20–H91 form the KH type-2 domain.

Belongs to the universal ribosomal protein uS3 family.

The polypeptide is Small ribosomal subunit protein uS3 (RPS3) (Encephalitozoon cuniculi (strain GB-M1) (Microsporidian parasite)).